The primary structure comprises 477 residues: Aspartyl/glutamyl-tRNA(Asn/Gln) amidotransferase subunit B (477 aa).

It belongs to the GatB/GatE family. GatB subfamily. In terms of assembly, heterotrimer of A, B and C subunits.

The catalysed reaction is L-glutamyl-tRNA(Gln) + L-glutamine + ATP + H2O = L-glutaminyl-tRNA(Gln) + L-glutamate + ADP + phosphate + H(+). It catalyses the reaction L-aspartyl-tRNA(Asn) + L-glutamine + ATP + H2O = L-asparaginyl-tRNA(Asn) + L-glutamate + ADP + phosphate + 2 H(+). Its function is as follows. Allows the formation of correctly charged Asn-tRNA(Asn) or Gln-tRNA(Gln) through the transamidation of misacylated Asp-tRNA(Asn) or Glu-tRNA(Gln) in organisms which lack either or both of asparaginyl-tRNA or glutaminyl-tRNA synthetases. The reaction takes place in the presence of glutamine and ATP through an activated phospho-Asp-tRNA(Asn) or phospho-Glu-tRNA(Gln). The sequence is that of Aspartyl/glutamyl-tRNA(Asn/Gln) amidotransferase subunit B from Thioalkalivibrio sulfidiphilus (strain HL-EbGR7).